We begin with the raw amino-acid sequence, 274 residues long: Diaminopimelate epimerase (274 aa).

The substrate site is built by asparagine 11, glutamine 44, and asparagine 64. Cysteine 73 acts as the Proton donor in catalysis. Residues 74–75 (GN), asparagine 157, asparagine 190, and 208–209 (ER) each bind substrate. Cysteine 217 acts as the Proton acceptor in catalysis. 218-219 (GS) is a binding site for substrate.

The protein belongs to the diaminopimelate epimerase family. As to quaternary structure, homodimer (Potential). Previously DapF has been proposed to be a monomer, however it seems that it adopts a dimeric structure.

Its subcellular location is the cytoplasm. It carries out the reaction (2S,6S)-2,6-diaminopimelate = meso-2,6-diaminopimelate. It functions in the pathway amino-acid biosynthesis; L-lysine biosynthesis via DAP pathway; DL-2,6-diaminopimelate from LL-2,6-diaminopimelate: step 1/1. With respect to regulation, inhibited by LL-aziridino (LL-AziDAP), DL-aziridino (DL-AziDAP). Also inhibited by (2S,3R,6S)-2,6-diamino-3-fluoropimelate (L,L-3-fluoro-DAP) and (2R,3S,6S)-2,6-diamino-3-fluoropimelate (D,L-3-fluoro-DAP). In terms of biological role, catalyzes the stereoinversion of LL-2,6-diaminopimelate (L,L-DAP) to meso-diaminopimelate (meso-DAP), a precursor of L-lysine and an essential component of the bacterial peptidoglycan. Only accepts DAP isomers with the L configuration. This chain is Diaminopimelate epimerase, found in Haemophilus influenzae (strain ATCC 51907 / DSM 11121 / KW20 / Rd).